We begin with the raw amino-acid sequence, 82 residues long: MLHPSYNDLMQVVNSEVEPGEQPVVNSRYSIVLATAKRARQIIDGAEPLTESSCNKPLSIAVEELYKSKVKIVSEDDENENE.

The protein belongs to the RNA polymerase subunit omega family. As to quaternary structure, the RNAP catalytic core consists of 2 alpha, 1 beta, 1 beta' and 1 omega subunit. When a sigma factor is associated with the core the holoenzyme is formed, which can initiate transcription.

The catalysed reaction is RNA(n) + a ribonucleoside 5'-triphosphate = RNA(n+1) + diphosphate. Its function is as follows. Promotes RNA polymerase assembly. Latches the N- and C-terminal regions of the beta' subunit thereby facilitating its interaction with the beta and alpha subunits. The chain is DNA-directed RNA polymerase subunit omega from Lachnoclostridium phytofermentans (strain ATCC 700394 / DSM 18823 / ISDg) (Clostridium phytofermentans).